A 163-amino-acid polypeptide reads, in one-letter code: Phosphopantetheine adenylyltransferase (163 aa).

Ser-10 lines the substrate pocket. ATP is bound by residues 10–11 and His-18; that span reads SF. 3 residues coordinate substrate: Lys-42, Leu-74, and Arg-88. Residues 89–91, Glu-99, and 124–130 contribute to the ATP site; these read GLR and YSFLSSS.

The protein belongs to the bacterial CoaD family. As to quaternary structure, homohexamer. Mg(2+) is required as a cofactor.

The protein resides in the cytoplasm. It catalyses the reaction (R)-4'-phosphopantetheine + ATP + H(+) = 3'-dephospho-CoA + diphosphate. Its pathway is cofactor biosynthesis; coenzyme A biosynthesis; CoA from (R)-pantothenate: step 4/5. Functionally, reversibly transfers an adenylyl group from ATP to 4'-phosphopantetheine, yielding dephospho-CoA (dPCoA) and pyrophosphate. This chain is Phosphopantetheine adenylyltransferase, found in Bacillus mycoides (strain KBAB4) (Bacillus weihenstephanensis).